A 214-amino-acid chain; its full sequence is Octanoyltransferase (214 aa).

One can recognise a BPL/LPL catalytic domain in the interval 29–214; the sequence is SETLDEIWVL…QHLQKQLIPS (186 aa). Residues 69 to 76, 146 to 148, and 159 to 161 each bind substrate; these read RGGEITYH, ALG, and GLA. Catalysis depends on C177, which acts as the Acyl-thioester intermediate.

It belongs to the LipB family.

It is found in the cytoplasm. It catalyses the reaction octanoyl-[ACP] + L-lysyl-[protein] = N(6)-octanoyl-L-lysyl-[protein] + holo-[ACP] + H(+). Its pathway is protein modification; protein lipoylation via endogenous pathway; protein N(6)-(lipoyl)lysine from octanoyl-[acyl-carrier-protein]: step 1/2. Its function is as follows. Catalyzes the transfer of endogenously produced octanoic acid from octanoyl-acyl-carrier-protein onto the lipoyl domains of lipoate-dependent enzymes. Lipoyl-ACP can also act as a substrate although octanoyl-ACP is likely to be the physiological substrate. The sequence is that of Octanoyltransferase from Polynucleobacter necessarius subsp. necessarius (strain STIR1).